A 239-amino-acid polypeptide reads, in one-letter code: Ribonuclease 3 (239 aa).

The RNase III domain maps to 12 to 137; it reads RARLETAIGY…LIAAIYLDGG (126 aa). A Mg(2+)-binding site is contributed by glutamate 50. Aspartate 54 is an active-site residue. Residues aspartate 123 and glutamate 126 each contribute to the Mg(2+) site. Glutamate 126 is a catalytic residue. Residues 162-231 form the DRBM domain; that stretch reads DAKTELQEWA…AMRLLEREGV (70 aa).

The protein belongs to the ribonuclease III family. As to quaternary structure, homodimer. It depends on Mg(2+) as a cofactor.

It is found in the cytoplasm. It catalyses the reaction Endonucleolytic cleavage to 5'-phosphomonoester.. In terms of biological role, digests double-stranded RNA. Involved in the processing of primary rRNA transcript to yield the immediate precursors to the large and small rRNAs (23S and 16S). Processes some mRNAs, and tRNAs when they are encoded in the rRNA operon. Processes pre-crRNA and tracrRNA of type II CRISPR loci if present in the organism. The polypeptide is Ribonuclease 3 (Sinorhizobium fredii (strain NBRC 101917 / NGR234)).